A 317-amino-acid polypeptide reads, in one-letter code: Transaldolase (317 aa).

The Schiff-base intermediate with substrate role is filled by K132.

Belongs to the transaldolase family. Type 1 subfamily. In terms of assembly, homodimer.

The protein resides in the cytoplasm. The enzyme catalyses D-sedoheptulose 7-phosphate + D-glyceraldehyde 3-phosphate = D-erythrose 4-phosphate + beta-D-fructose 6-phosphate. It functions in the pathway carbohydrate degradation; pentose phosphate pathway; D-glyceraldehyde 3-phosphate and beta-D-fructose 6-phosphate from D-ribose 5-phosphate and D-xylulose 5-phosphate (non-oxidative stage): step 2/3. Transaldolase is important for the balance of metabolites in the pentose-phosphate pathway. In Haemophilus influenzae (strain PittEE), this protein is Transaldolase.